The sequence spans 273 residues: Multivesicular body subunit 12A (273 aa).

Positions 9–151 (GMPLAGLAWS…GFAIWCRKAK (143 aa)) constitute an MABP domain. Threonine 130 is subject to Phosphothreonine. The tract at residues 154 to 186 (RPVPKPRALSRDVRDLSLDSPGQPSKGGFPERT) is disordered. The SH3-binding signature appears at 155 to 160 (PVPKPR). A phosphoserine mark is found at serine 163, serine 170, serine 195, and serine 202. The tract at residues 192–273 (SRASTLRRND…AAARLPPSVS (82 aa)) is interaction with TSG101, VPS37B and VPS28. Tyrosine 204 carries the phosphotyrosine modification. Position 207 is a phosphoserine (serine 207). Residues 215 to 265 (MDGVPFTLHPRFEGKSCGPLAFSAFADLTIKSLADIEAEYNYGFVVEKTAA) form the UMA domain.

The protein belongs to the MVB12 family. As to quaternary structure, component of the ESCRT-I complex (endosomal sorting complex required for transport I) which consists of TSG101, VPS28, a VPS37 protein (VPS37A to -D) and MVB12A or MVB12B in a 1:1:1:1 stoichiometry. Interacts with CD2AP and CIN85/SH3KBP1. Interacts with CD2AP (via one of the SH3 domains). Interacts with TSG101; the association appears to be mediated by the TSG101-VPS37 binary subcomplex. Interacts with VPS28. Interacts with VPS37B; the association appears to be mediated by the TSG101-VPS37 binary subcomplex. Interacts with VPS37C; the association appears to be mediated by the TSG101-VPS37 binary subcomplex. Interacts with VPS37D; the association appears to be mediated by the TSG101-VPS37 binary subcomplex. Interacts with CEP55. In terms of processing, phosphorylated on Tyr-204 upon EGF stimulation. Phosphorylation is required for interaction with CD2AP and CIN85/SH3KBP1.

It is found in the cytoplasm. The protein resides in the cytoskeleton. It localises to the nucleus. Its subcellular location is the endosome. The protein localises to the microtubule organizing center. It is found in the centrosome. The protein resides in the late endosome membrane. Its function is as follows. Component of the ESCRT-I complex, a regulator of vesicular trafficking process. Required for the sorting of endocytic ubiquitinated cargos into multivesicular bodies. May be involved in the ligand-mediated internalization and down-regulation of EGF receptor. In Bos taurus (Bovine), this protein is Multivesicular body subunit 12A (MVB12A).